The following is a 465-amino-acid chain: 5-cytosine rRNA methyltransferase nsun-4 (465 aa).

Residues 1-6 (MSCLRQ) constitute a mitochondrion transit peptide. Residues 106–130 (QAIETKRKSVEEKANRETQKVKHEI) are compositionally biased toward basic and acidic residues. The tract at residues 106-145 (QAIETKRKSVEEKANRETQKVKHEISNPSTSTNTEDSEPD) is disordered. S-adenosyl-L-methionine contacts are provided by residues 260–266 (CAAPGGK), aspartate 283, aspartate 316, and aspartate 335. Catalysis depends on cysteine 390, which acts as the Nucleophile.

Belongs to the class I-like SAM-binding methyltransferase superfamily. RsmB/NOP family.

It is found in the mitochondrion. The enzyme catalyses a cytidine in rRNA + S-adenosyl-L-methionine = a 5-methylcytidine in rRNA + S-adenosyl-L-homocysteine + H(+). It catalyses the reaction a cytidine in tRNA + S-adenosyl-L-methionine = a 5-methylcytidine in tRNA + S-adenosyl-L-homocysteine + H(+). Functionally, mitochondrial methyltransferase which methylates cytosine to 5-methylcytosine (m5C) in rRNAs and tRNAs at multiple sites. May play a role in the translation of leucine and proline codons. In Caenorhabditis elegans, this protein is 5-cytosine rRNA methyltransferase nsun-4.